Consider the following 803-residue polypeptide: Translation initiation factor IF-2 (803 aa).

Disordered regions lie at residues 93-123 (TKPV…LNEK) and 138-206 (EVKE…ASAK). The segment covering 111–121 (VPPTSDTTNLN) has biased composition (polar residues). Residues 138 to 155 (EVKEEAKKTPSEKKETPK) show a composition bias toward basic and acidic residues. A compositionally biased stretch (basic residues) spans 156-167 (KGPRKETRRSRK). The segment covering 168–188 (PDKEDKWEREELHMTKLVEER) has biased composition (basic and acidic residues). The region spanning 302 to 471 (PRAPVVTIMG…LLQAEVLELK (170 aa)) is the tr-type G domain. The segment at 311 to 318 (GHVDHGKT) is G1. 311 to 318 (GHVDHGKT) is a binding site for GTP. Positions 336–340 (GITQH) are G2. Residues 357 to 360 (DTPG) form a G3 region. GTP is bound by residues 357–361 (DTPGH) and 411–414 (NKID). The tract at residues 411–414 (NKID) is G4. The tract at residues 447 to 449 (SAK) is G5.

Belongs to the TRAFAC class translation factor GTPase superfamily. Classic translation factor GTPase family. IF-2 subfamily.

It localises to the cytoplasm. Functionally, one of the essential components for the initiation of protein synthesis. Protects formylmethionyl-tRNA from spontaneous hydrolysis and promotes its binding to the 30S ribosomal subunits. Also involved in the hydrolysis of GTP during the formation of the 70S ribosomal complex. This Coxiella burnetii (strain RSA 493 / Nine Mile phase I) protein is Translation initiation factor IF-2.